Here is a 446-residue protein sequence, read N- to C-terminus: Tubulin beta chain (446 aa).

GTP contacts are provided by Q11, E69, S138, G142, T143, G144, N204, and N226. Mg(2+) is bound at residue E69. The segment at 427–446 is disordered; it reads EAGVDEGEEFEEEEDFGDEQ. A compositionally biased stretch (acidic residues) spans 429 to 446; that stretch reads GVDEGEEFEEEEDFGDEQ.

The protein belongs to the tubulin family. In terms of assembly, dimer of alpha and beta chains. A typical microtubule is a hollow water-filled tube with an outer diameter of 25 nm and an inner diameter of 15 nM. Alpha-beta heterodimers associate head-to-tail to form protofilaments running lengthwise along the microtubule wall with the beta-tubulin subunit facing the microtubule plus end conferring a structural polarity. Microtubules usually have 13 protofilaments but different protofilament numbers can be found in some organisms and specialized cells. Requires Mg(2+) as cofactor.

The protein resides in the cytoplasm. The protein localises to the cytoskeleton. In terms of biological role, tubulin is the major constituent of microtubules, a cylinder consisting of laterally associated linear protofilaments composed of alpha- and beta-tubulin heterodimers. Microtubules grow by the addition of GTP-tubulin dimers to the microtubule end, where a stabilizing cap forms. Below the cap, tubulin dimers are in GDP-bound state, owing to GTPase activity of alpha-tubulin. In Giardia intestinalis (Giardia lamblia), this protein is Tubulin beta chain.